Here is a 204-residue protein sequence, read N- to C-terminus: Intraflagellar transport protein 27 (204 aa).

Residues 23–30 (GEATVGKS), 75–79 (DTAGS), and 136–139 (NKTD) contribute to the GTP site.

The protein belongs to the small GTPase superfamily. Rab family. Component of the IFT complex B, the core composed of IFT25, IFT27, IFT46, IFT52, IFT74, IFT81 and IFT88 as well as associated subunits IFT20, IFT57, IFT80 and IFT172. Interacts with IFT25; the interaction is direct.

It localises to the cell projection. Its subcellular location is the cilium. The protein resides in the flagellum. It is found in the cytoplasm. The protein localises to the cytoskeleton. It localises to the flagellum basal body. Its function is as follows. Small GTPase-like component of the intraflagellar transport (IFT) complex B. Forms a subcomplex within the IFT complex B with IFT25. Has very low GTPase activity either because it lacks the conserved catalytic Gln in position 79 or because it requires some GTPase-activating protein (GAP) for GTP turnover. In Chlamydomonas reinhardtii (Chlamydomonas smithii), this protein is Intraflagellar transport protein 27 (IFT27).